Reading from the N-terminus, the 154-residue chain is Large ribosomal subunit protein uL13 (154 aa).

The protein belongs to the universal ribosomal protein uL13 family. As to quaternary structure, part of the 50S ribosomal subunit.

Functionally, this protein is one of the early assembly proteins of the 50S ribosomal subunit, although it is not seen to bind rRNA by itself. It is important during the early stages of 50S assembly. The polypeptide is Large ribosomal subunit protein uL13 (Bartonella quintana (strain Toulouse) (Rochalimaea quintana)).